The primary structure comprises 535 residues: CTP synthase (535 aa).

The amidoligase domain stretch occupies residues 1–267 (MTKYIFVTGG…DQIVLDHFGV (267 aa)). Residue S13 participates in CTP binding. S13 contacts UTP. 14–19 (SLGKGI) provides a ligand contact to ATP. Y54 lines the L-glutamine pocket. D71 provides a ligand contact to ATP. Residues D71 and E141 each contribute to the Mg(2+) site. Residues 148–150 (DIE), 188–193 (KTKPTQ), and K224 contribute to the CTP site. UTP is bound by residues 188 to 193 (KTKPTQ) and K224. The Glutamine amidotransferase type-1 domain occupies 292–535 (KIALVGKYVA…VAAASREVKD (244 aa)). L-glutamine is bound at residue G354. The active-site Nucleophile; for glutamine hydrolysis is C381. Residues 382 to 385 (LGMQ), E405, and R463 each bind L-glutamine. Residues H508 and E510 contribute to the active site.

This sequence belongs to the CTP synthase family. Homotetramer.

The catalysed reaction is UTP + L-glutamine + ATP + H2O = CTP + L-glutamate + ADP + phosphate + 2 H(+). The enzyme catalyses L-glutamine + H2O = L-glutamate + NH4(+). It carries out the reaction UTP + NH4(+) + ATP = CTP + ADP + phosphate + 2 H(+). Its pathway is pyrimidine metabolism; CTP biosynthesis via de novo pathway; CTP from UDP: step 2/2. With respect to regulation, allosterically activated by GTP, when glutamine is the substrate; GTP has no effect on the reaction when ammonia is the substrate. The allosteric effector GTP functions by stabilizing the protein conformation that binds the tetrahedral intermediate(s) formed during glutamine hydrolysis. Inhibited by the product CTP, via allosteric rather than competitive inhibition. In terms of biological role, catalyzes the ATP-dependent amination of UTP to CTP with either L-glutamine or ammonia as the source of nitrogen. Regulates intracellular CTP levels through interactions with the four ribonucleotide triphosphates. The sequence is that of CTP synthase from Levilactobacillus brevis (strain ATCC 367 / BCRC 12310 / CIP 105137 / JCM 1170 / LMG 11437 / NCIMB 947 / NCTC 947) (Lactobacillus brevis).